We begin with the raw amino-acid sequence, 340 residues long: Extracellular matrix protein-binding protein emp (340 aa).

A signal peptide spans 1 to 26; the sequence is MKKKLLVLTMSTLFATQIMNSNHAKA.

The protein localises to the cell surface. Functionally, adhesin that binds to the host cell extracellular matrix proteins fibronectin, fibrinogen, collagen, and vitronectin. This Staphylococcus aureus (strain MSSA476) protein is Extracellular matrix protein-binding protein emp (emp).